We begin with the raw amino-acid sequence, 608 residues long: Probable methyltransferase PMT3 (608 aa).

Residues Met1–Arg12 are Cytoplasmic-facing. Residues Val13–Ser33 traverse the membrane as a helical; Signal-anchor for type II membrane protein segment. Residues Ser34 to Glu608 are Lumenal-facing. Asn342 is a glycosylation site (N-linked (GlcNAc...) asparagine).

The protein belongs to the methyltransferase superfamily.

It localises to the golgi apparatus membrane. The protein is Probable methyltransferase PMT3 of Arabidopsis thaliana (Mouse-ear cress).